The following is a 61-amino-acid chain: Photosystem II reaction center protein K (61 aa).

Positions 1–24 (MINIFSFICIYLHSALYSSSFFFG) are excised as a propeptide. A helical membrane pass occupies residues 40 to 60 (MPVIPLFFFLLAFVWQAAVSF).

It belongs to the PsbK family. PSII is composed of 1 copy each of membrane proteins PsbA, PsbB, PsbC, PsbD, PsbE, PsbF, PsbH, PsbI, PsbJ, PsbK, PsbL, PsbM, PsbT, PsbX, PsbY, PsbZ, Psb30/Ycf12, at least 3 peripheral proteins of the oxygen-evolving complex and a large number of cofactors. It forms dimeric complexes.

It is found in the plastid. The protein localises to the chloroplast thylakoid membrane. One of the components of the core complex of photosystem II (PSII). PSII is a light-driven water:plastoquinone oxidoreductase that uses light energy to abstract electrons from H(2)O, generating O(2) and a proton gradient subsequently used for ATP formation. It consists of a core antenna complex that captures photons, and an electron transfer chain that converts photonic excitation into a charge separation. The chain is Photosystem II reaction center protein K from Pelargonium hortorum (Common geranium).